We begin with the raw amino-acid sequence, 381 residues long: Spermidine/putrescine import ATP-binding protein PotA (381 aa).

An ABC transporter domain is found at 22–252 (VELRNVFKFF…PKTSFVADFI (231 aa)). Residue 54-61 (GPSGCGKT) coordinates ATP.

It belongs to the ABC transporter superfamily. Spermidine/putrescine importer (TC 3.A.1.11.1) family. The complex is composed of two ATP-binding proteins (PotA), two transmembrane proteins (PotB and PotC) and a solute-binding protein (PotD).

It localises to the cell inner membrane. The enzyme catalyses ATP + H2O + polyamine-[polyamine-binding protein]Side 1 = ADP + phosphate + polyamineSide 2 + [polyamine-binding protein]Side 1.. Its function is as follows. Part of the ABC transporter complex PotABCD involved in spermidine/putrescine import. Responsible for energy coupling to the transport system. This Trichormus variabilis (strain ATCC 29413 / PCC 7937) (Anabaena variabilis) protein is Spermidine/putrescine import ATP-binding protein PotA.